A 211-amino-acid polypeptide reads, in one-letter code: Probable GTP-binding protein EngB (211 aa).

The region spanning Pro-22–Pro-195 is the EngB-type G domain. GTP is bound by residues Gly-30 to Ser-37, Gly-57 to Thr-61, Asp-75 to Gly-78, Thr-142 to Asp-145, and Phe-174 to Ser-176. The Mg(2+) site is built by Ser-37 and Thr-59.

It belongs to the TRAFAC class TrmE-Era-EngA-EngB-Septin-like GTPase superfamily. EngB GTPase family. Requires Mg(2+) as cofactor.

Necessary for normal cell division and for the maintenance of normal septation. The chain is Probable GTP-binding protein EngB from Lachnospira eligens (strain ATCC 27750 / DSM 3376 / VPI C15-48 / C15-B4) (Eubacterium eligens).